A 2016-amino-acid polypeptide reads, in one-letter code: Sodium channel protein type 5 subunit alpha (2016 aa).

The Cytoplasmic portion of the chain corresponds to 1–129 (MANFLLPRGT…IRRAAVKILV (129 aa)). A disordered region spans residues 28–56 (MAEKQARGSTTLQESREGLPEEEAPRPQL). Phosphoserine is present on S36. The residue at position 38 (T38) is a Phosphothreonine. Positions 41 to 52 (ESREGLPEEEAP) are enriched in basic and acidic residues. The stretch at 113 to 420 (VLSPFHPIRR…VVAMAYEEQN (308 aa)) is one I repeat. The chain crosses the membrane as a helical span at residues 130–149 (HSLFNMLIMCTILTNCVFMA). The Extracellular segment spans residues 150-157 (QHDPPPWT). A helical membrane pass occupies residues 158–179 (KYVEYTFTAIYTFESLVKILAR). The Cytoplasmic portion of the chain corresponds to 180–188 (GFCLHAFTF). The chain crosses the membrane as a helical span at residues 189-209 (LRDPWNWLDFSVIIMAYTTEF). Residues 210–216 (VDLGNVS) lie on the Extracellular side of the membrane. A glycan (N-linked (GlcNAc...) asparagine) is linked at N214. Residues 217-236 (ALRTFRVLRALKTISVISGL) traverse the membrane as a helical segment. At 237–249 (KTIVGALIQSVKK) the chain is on the cytoplasmic side. A helical membrane pass occupies residues 250–272 (LADVMVLTVFCLSVFALIGLQLF). The Extracellular segment spans residues 273-357 (MGNLRHKCVR…PDHGYTSFDS (85 aa)). C280 and C335 are joined by a disulfide. N-linked (GlcNAc...) asparagine glycosylation is found at N283, N288, N291, N318, and N328. The segment at residues 358–378 (FAWAFLALFRLMTQDCWERLY) is an intramembrane region (pore-forming). Topologically, residues 379 to 386 (QQTLRSAG) are extracellular. The helical transmembrane segment at 387–413 (KIYMIFFMLVIFLGSFYLVNLILAVVA) threads the bilayer. The Cytoplasmic segment spans residues 414–719 (MAYEEQNQAT…VKLVVMDPFT (306 aa)). Phosphoserine is present on residues S457, S460, S483, and S484. The disordered stretch occupies residues 461-591 (LEMSPLAPVN…APGHALHGKK (131 aa)). The residue at position 486 (T486) is a Phosphothreonine. A compositionally biased stretch (basic and acidic residues) spans 491 to 503 (EDRLPKSDSEDGP). Phosphoserine occurs at positions 497 and 510. Residues 509-528 (LSLTRGLSRTSMKPRSSRGS) are compositionally biased toward polar residues. Dimethylated arginine; alternate occurs at positions 513 and 526. 2 positions are modified to omega-N-methylarginine; alternate: R513 and R526. Phosphoserine is present on residues S539, S571, S664, and S667. Residues 570 to 580 (TSAQGQPSPGT) show a composition bias toward polar residues. Dimethylated arginine; alternate is present on R680. An Omega-N-methylarginine; alternate modification is found at R680. The II repeat unit spans residues 699 to 969 (CCPLWMSIKQ…QLALARIQRG (271 aa)). The helical transmembrane segment at 720-737 (DLTITMCIVLNTLFMALE) threads the bilayer. Topologically, residues 738–746 (HYNMTSEFE) are extracellular. N740 is a glycosylation site (N-linked (GlcNAc...) asparagine). A helical transmembrane segment spans residues 747–769 (EMLQVGNLVFTGIFTAEMTFKII). Residues 770 to 775 (ALDPYY) lie on the Cytoplasmic side of the membrane. Residues 776 to 796 (YFQQGWNIFDSIIVILSLMEL) traverse the membrane as a helical segment. Residues 797–806 (GLSRMSNLSV) lie on the Extracellular side of the membrane. N803 carries N-linked (GlcNAc...) asparagine glycosylation. The helical transmembrane segment at 807 to 821 (LRSFRLLRVFKLAKS) threads the bilayer. The Cytoplasmic portion of the chain corresponds to 822 to 838 (WPTLNTLIKIIGNSVGA). The helical transmembrane segment at 839 to 860 (LGNLTLVLAIIVFIFAVVGMQL) threads the bilayer. At 861–884 (FGKNYSELRDSDSGLLPRWHMMDF) the chain is on the extracellular side. Residue N864 is glycosylated (N-linked (GlcNAc...) asparagine). The segment at residues 885–903 (FHAFLIIFRILCGEWIETM) is an intramembrane region (pore-forming). At 904–912 (WDCMEVSGQ) the chain is on the extracellular side. C906 and C915 are disulfide-bonded. Residues 913 to 941 (SLCLLVFLLVMVIGNLVVLNLFLALLLSS) traverse the membrane as a helical segment. The Cytoplasmic portion of the chain corresponds to 942–1203 (FSADNLTAPD…LRKTCYHIVE (262 aa)). Residues 1005-1141 (IATPYSPPPP…PEDSCSEGST (137 aa)) are disordered. Residues 1015 to 1030 (ETEKVPPTRKETRFEE) are compositionally biased toward basic and acidic residues. Residues 1033-1044 (QPGQGTPGDPEP) are compositionally biased toward low complexity. Positions 1054–1071 (SDTDDQEEDEENSLGTEE) are enriched in acidic residues. Low complexity predominate over residues 1096–1113 (SQVSATASSEAEASASQA). An III repeat occupies 1187-1501 (PGKVWWRLRK…KKYYNAMKKL (315 aa)). A helical transmembrane segment spans residues 1204 to 1225 (HSWFETFIIFMILLSSGALAFE). The Extracellular portion of the chain corresponds to 1226 to 1236 (DIYLEERKTIK). The chain crosses the membrane as a helical span at residues 1237–1259 (VLLEYADKMFTYVFVLEMLLKWV). The Cytoplasmic portion of the chain corresponds to 1260 to 1268 (AYGFKKYFT). The helical transmembrane segment at 1269-1291 (NAWCWLDFLIVDVSLVSLVANTL) threads the bilayer. The Extracellular segment spans residues 1292–1297 (GFAEMG). A helical membrane pass occupies residues 1298–1317 (PIKSLRTLRALRPLRALSRF). The Cytoplasmic portion of the chain corresponds to 1318 to 1330 (EGMRVVVNALVGA). The chain crosses the membrane as a helical span at residues 1331–1355 (IPSIMNVLLVCLIFWLIFSIMGVNL). At 1356 to 1400 (FAGKFGRCINQTEGDLPLNYTIVNNKSQCESLNLTGELYWTKVKV) the chain is on the extracellular side. N-linked (GlcNAc...) asparagine glycans are attached at residues N1365, N1374, N1380, and N1388. An intramembrane region (pore-forming) is located at residues 1401–1422 (NFDNVGAGYLALLQVATFKGWM). Residues 1423 to 1445 (DIMYAAVDSRGYEEQPQWEYNLY) are Extracellular-facing. The helical transmembrane segment at 1446–1470 (MYIYFVIFIIFGSFFTLNLFIGVII) threads the bilayer. The Cytoplasmic portion of the chain corresponds to 1471-1528 (DNFNQQKKKLGGQDIFMTEEQKKYYNAMKKLGSKKPQKPIPRPLNKYQGFIFDIVTKQ). S1503 is modified (phosphoserine; by PKC). An IV repeat occupies 1510 to 1807 (IPRPLNKYQG…WEKFDPEATQ (298 aa)). A helical transmembrane segment spans residues 1529–1547 (AFDVTIMFLICLNMVTMMV). The Extracellular segment spans residues 1548–1558 (ETDDQSPEKIN). A helical membrane pass occupies residues 1559–1580 (ILAKINLLFVAIFTGECIVKLA). Topologically, residues 1581–1589 (ALRHYYFTN) are cytoplasmic. A helical transmembrane segment spans residues 1590–1612 (SWNIFDFVVVILSIVGTVLSDII). Residues 1613-1619 (QKYFFSP) lie on the Extracellular side of the membrane. Residues 1620 to 1640 (TLFRVIRLARIGRILRLIRGA) form a helical membrane-spanning segment. The Cytoplasmic portion of the chain corresponds to 1641 to 1650 (KGIRTLLFAL). A helical membrane pass occupies residues 1651–1679 (MMSLPALFNIGLLLFLVMFIYSIFGMANF). Topologically, residues 1680-1697 (AYVKWEAGIDDMFNFQTF) are extracellular. The segment at residues 1698–1714 (ANSMLCLFQITTSAGWD) is an intramembrane region (pore-forming). Topologically, residues 1715–1745 (GLLSPILNTGPPYCDPTLPNSNGSRGDCGSP) are extracellular. Residue N1736 is glycosylated (N-linked (GlcNAc...) asparagine). A helical membrane pass occupies residues 1746–1771 (AVGILFFTTYIIISFLIVVNMYIAII). The Cytoplasmic portion of the chain corresponds to 1772–2016 (LENFSVATEE…SPDRDRESIV (245 aa)). Residues 1839–1901 (DLPMVSGDRI…ITTTLRRKHE (63 aa)) form an interaction with FGF13 region. An IQ domain is found at 1901 to 1930 (EEVSAMVIQRAFRRHLLQRSLKHASFLFRQ). Residues 1959-1979 (PLGPPSSSSISSTSFPPSYDS) are compositionally biased toward low complexity. The disordered stretch occupies residues 1959–2016 (PLGPPSSSSISSTSFPPSYDSVTRATSDNLQVRGSDYSHSEDLADFPPSPDRDRESIV). An interaction with NEDD4, NEDD4L and WWP2 region spans residues 1974–1977 (PPSY). Positions 1981-1990 (TRATSDNLQV) are enriched in polar residues.

It belongs to the sodium channel (TC 1.A.1.10) family. Nav1.5/SCN5A subfamily. In terms of assembly, cannot form the same regulatory interactions with beta subunits as other Navs do. Interacts with the PDZ domain of the syntrophin SNTA1, SNTB1 and SNTB2. Interacts with NEDD4, NEDD4L, WWP2 and GPD1L. Interacts with CALM. Interacts with FGF13; the interaction is direct and FGF13 may regulate SNC5A density at membranes and function. May also interact with FGF12 and FGF14. Interacts with TMEM233. Interacts with the spider Jingzhaotoxin-I (AC P83974, AC B1P1B7, AC B1P1B8). Interacts with ANK3. Interacts with PKP2 (via N-terminus). Interacts with XIRP2; the interaction is required for normal action potential configuration in the heart. In terms of processing, ubiquitinated by NEDD4L; which promotes its endocytosis. Does not seem to be ubiquitinated by NEDD4 or WWP2. Phosphorylation at Ser-1503 by PKC in a highly conserved cytoplasmic loop slows inactivation of the sodium channel and reduces peak sodium currents. Regulated through phosphorylation by CaMK2D. Post-translationally, lacks the cysteine which covalently binds the conotoxin GVIIJ. This cysteine (position 868) is speculated in other sodium channel subunits alpha to be implied in covalent binding with the sodium channel subunit beta-2 or beta-4. In terms of processing, N-glycosylated at Asn-318, probably hinders potential interaction with regulatory subunits. In terms of tissue distribution, found in jejunal circular smooth muscle cells (at protein level). Expressed in human atrial and ventricular cardiac muscle but not in adult skeletal muscle, brain, myometrium, liver, or spleen. Isoform 4 is expressed in brain.

The protein localises to the cell membrane. It is found in the cytoplasm. The protein resides in the perinuclear region. It localises to the sarcolemma. Its subcellular location is the T-tubule. The protein localises to the cell junction. It carries out the reaction Na(+)(in) = Na(+)(out). Its activity is regulated as follows. Channel inactivation is regulated by intracellular calcium levels. It is a tetrodotoxin-resistant voltage-gated Na(+) channel (Nav). Pore-forming subunit of Nav1.5, a voltage-gated sodium (Nav) channel that directly mediates the depolarizing phase of action potentials in excitable membranes. Navs, also called VGSCs (voltage-gated sodium channels) or VDSCs (voltage-dependent sodium channels), operate by switching between closed and open conformations depending on the voltage difference across the membrane. In the open conformation they allow Na(+) ions to selectively pass through the pore, along their electrochemical gradient. The influx of Na(+) ions provokes membrane depolarization, initiating the propagation of electrical signals throughout cells and tissues. Nav1.5 is the predominant sodium channel expressed in myocardial cells and it is responsible for the initial upstroke of the action potential in cardiac myocytes, thereby initiating the heartbeat. Required for normal electrical conduction including formation of the infranodal ventricular conduction system and normal action potential configuration, as a result of its interaction with XIRP2. This is Sodium channel protein type 5 subunit alpha from Homo sapiens (Human).